We begin with the raw amino-acid sequence, 269 residues long: Protein shisa-1 (269 aa).

An N-terminal signal peptide occupies residues 1–18 (MEFIVLLTVCALLGLSCG). Residues 19–98 (QHGEYCHGWT…LPPTVPTYFP (80 aa)) are Extracellular-facing. A helical transmembrane segment spans residues 99 to 119 (FLLVGSIFVSFVILGSLVGLC). The Cytoplasmic portion of the chain corresponds to 120–269 (CCKCLKPEDD…TVCSGSPSKC (150 aa)). The segment at 129–167 (DTQVSGPAPIQSRLLDQDPSTDTSRHSSSSSASMPRPPI) is disordered. A compositionally biased stretch (low complexity) spans 146–162 (DPSTDTSRHSSSSSASM).

The protein belongs to the shisa family. As to quaternary structure, interacts with immature forms of fzd8 and fgfr.

Its subcellular location is the endoplasmic reticulum. The protein resides in the membrane. Its function is as follows. Required for head formation during gastrulation. Functions as an inhibitor for the caudalizing signals wnt and fgf, does not inhibit bmp, activin and nodal signaling in head formation process. Induces retention of fzd8 in the endoplasmic reticulum and inhibits trafficking of fzd8 to the cell surface. The sequence is that of Protein shisa-1 (shisa1) from Xenopus laevis (African clawed frog).